Reading from the N-terminus, the 172-residue chain is Shikimate kinase (172 aa).

Position 11–16 (11–16 (GCGKST)) interacts with ATP. Ser15 serves as a coordination point for Mg(2+). Substrate-binding residues include Asp33, Arg57, and Gly80. Residue Arg120 coordinates ATP. Arg142 contacts substrate. Arg158 is an ATP binding site.

This sequence belongs to the shikimate kinase family. Monomer. It depends on Mg(2+) as a cofactor.

Its subcellular location is the cytoplasm. It carries out the reaction shikimate + ATP = 3-phosphoshikimate + ADP + H(+). It participates in metabolic intermediate biosynthesis; chorismate biosynthesis; chorismate from D-erythrose 4-phosphate and phosphoenolpyruvate: step 5/7. Functionally, catalyzes the specific phosphorylation of the 3-hydroxyl group of shikimic acid using ATP as a cosubstrate. The protein is Shikimate kinase of Flavobacterium johnsoniae (strain ATCC 17061 / DSM 2064 / JCM 8514 / BCRC 14874 / CCUG 350202 / NBRC 14942 / NCIMB 11054 / UW101) (Cytophaga johnsonae).